The chain runs to 356 residues: Dihydroorotate dehydrogenase (quinone) (356 aa).

Residues 66–70 and Thr-90 each bind FMN; that span reads AGFDK. Lys-70 is a binding site for substrate. 115-119 provides a ligand contact to substrate; that stretch reads NRMGF. The FMN site is built by Asn-143 and Asn-176. Asn-176 is a binding site for substrate. The active-site Nucleophile is the Ser-179. Asn-181 serves as a coordination point for substrate. Residues Lys-212 and Thr-240 each coordinate FMN. Substrate is bound at residue 241–242; that stretch reads NT. Residues Gly-264, Gly-293, and 314–315 contribute to the FMN site; that span reads YT.

It belongs to the dihydroorotate dehydrogenase family. Type 2 subfamily. As to quaternary structure, monomer. The cofactor is FMN.

The protein resides in the cell membrane. It carries out the reaction (S)-dihydroorotate + a quinone = orotate + a quinol. The protein operates within pyrimidine metabolism; UMP biosynthesis via de novo pathway; orotate from (S)-dihydroorotate (quinone route): step 1/1. In terms of biological role, catalyzes the conversion of dihydroorotate to orotate with quinone as electron acceptor. This is Dihydroorotate dehydrogenase (quinone) (pyrD) from Mycobacterium leprae (strain TN).